The sequence spans 880 residues: Alanine--tRNA ligase (880 aa).

Positions 567, 571, 669, and 673 each coordinate Zn(2+).

It belongs to the class-II aminoacyl-tRNA synthetase family. Requires Zn(2+) as cofactor.

The protein resides in the cytoplasm. The catalysed reaction is tRNA(Ala) + L-alanine + ATP = L-alanyl-tRNA(Ala) + AMP + diphosphate. Its function is as follows. Catalyzes the attachment of alanine to tRNA(Ala) in a two-step reaction: alanine is first activated by ATP to form Ala-AMP and then transferred to the acceptor end of tRNA(Ala). Also edits incorrectly charged Ser-tRNA(Ala) and Gly-tRNA(Ala) via its editing domain. The sequence is that of Alanine--tRNA ligase from Bacillus mycoides (strain KBAB4) (Bacillus weihenstephanensis).